Consider the following 620-residue polypeptide: Proline--tRNA ligase (620 aa).

This sequence belongs to the class-II aminoacyl-tRNA synthetase family. ProS type 1 subfamily. In terms of assembly, homodimer.

The protein resides in the cytoplasm. The catalysed reaction is tRNA(Pro) + L-proline + ATP = L-prolyl-tRNA(Pro) + AMP + diphosphate. In terms of biological role, catalyzes the attachment of proline to tRNA(Pro) in a two-step reaction: proline is first activated by ATP to form Pro-AMP and then transferred to the acceptor end of tRNA(Pro). As ProRS can inadvertently accommodate and process non-cognate amino acids such as alanine and cysteine, to avoid such errors it has two additional distinct editing activities against alanine. One activity is designated as 'pretransfer' editing and involves the tRNA(Pro)-independent hydrolysis of activated Ala-AMP. The other activity is designated 'posttransfer' editing and involves deacylation of mischarged Ala-tRNA(Pro). The misacylated Cys-tRNA(Pro) is not edited by ProRS. The polypeptide is Proline--tRNA ligase (Streptococcus suis (strain 98HAH33)).